The primary structure comprises 82 residues: Sec-independent protein translocase protein TatA (82 aa).

A helical membrane pass occupies residues 1–21 (MGSLSIWHWLIVGAVVLLVFG). The tract at residues 43–82 (GLSEDEEKAEAKPVGEPSLRSLDHQGAGDPLKTPDARKIG) is disordered.

This sequence belongs to the TatA/E family. The Tat system comprises two distinct complexes: a TatABC complex, containing multiple copies of TatA, TatB and TatC subunits, and a separate TatA complex, containing only TatA subunits. Substrates initially bind to the TatABC complex, which probably triggers association of the separate TatA complex to form the active translocon.

The protein resides in the cell inner membrane. Part of the twin-arginine translocation (Tat) system that transports large folded proteins containing a characteristic twin-arginine motif in their signal peptide across membranes. TatA could form the protein-conducting channel of the Tat system. The chain is Sec-independent protein translocase protein TatA from Methylocella silvestris (strain DSM 15510 / CIP 108128 / LMG 27833 / NCIMB 13906 / BL2).